The chain runs to 438 residues: MDGVSNWPAPSTPTPVHATLTIPGSKSQTNRALVLAALATPQGTSTISGALRSRDTDLMIGALQTLGFDVESVGTDSDLRVGGGLAPAAGARVDCGLAGTVLRFLPPVAALSTETVEFDGDEQARARPIAPLLAGLQSLGVRIDGDGLPFRVRGEGSVAGGTVEIDASASSQFVSGLMLSGALFRDGLTIVHTGESVPSAPHVAMTVSMLRDAGVEVDDTETNRWTVRPGRVAARHWTIEPDLSNAVPFLSAGVVSGGAVRVTGWPAVSTQPAAAIMAILEKVGAVVRQSESYLEVQGTRQYQGFDVDLHDVGELTPAVAALAAVATPGAVSRLRGVAHLRGHETDRLAALSAEINGLGGQCEETADGLVITAAPLHGGVWHSYADHRMAMAGAIVGLRTPGVEIEDIATTAKTLPEFPQMWADMLAGQTATDPEAGA.

Lys-26, Ser-27, and Arg-31 together coordinate 3-phosphoshikimate. Lys-26 contributes to the phosphoenolpyruvate binding site. Gly-99 and Arg-127 together coordinate phosphoenolpyruvate. 6 residues coordinate 3-phosphoshikimate: Ser-170, Ser-171, Gln-172, Ser-199, Glu-314, and His-343. Gln-172 lines the phosphoenolpyruvate pocket. Residue Glu-314 is the Proton acceptor of the active site. Positions 347, 388, and 413 each coordinate phosphoenolpyruvate.

The protein belongs to the EPSP synthase family. As to quaternary structure, monomer.

It localises to the cytoplasm. The catalysed reaction is 3-phosphoshikimate + phosphoenolpyruvate = 5-O-(1-carboxyvinyl)-3-phosphoshikimate + phosphate. The protein operates within metabolic intermediate biosynthesis; chorismate biosynthesis; chorismate from D-erythrose 4-phosphate and phosphoenolpyruvate: step 6/7. Its function is as follows. Catalyzes the transfer of the enolpyruvyl moiety of phosphoenolpyruvate (PEP) to the 5-hydroxyl of shikimate-3-phosphate (S3P) to produce enolpyruvyl shikimate-3-phosphate and inorganic phosphate. This is 3-phosphoshikimate 1-carboxyvinyltransferase from Mycobacterium sp. (strain JLS).